Here is a 515-residue protein sequence, read N- to C-terminus: Fatty acyl-CoA reductase 1 (515 aa).

Topologically, residues 1-465 (MVSIPEYYEG…ARKHLNKLRN (465 aa)) are cytoplasmic. The necessary and sufficient for PEX19-mediated localization into peroxisome membrane stretch occupies residues 451 to 507 (SGLPAARKHLNKLRNIRYGFNTILVILIWRIFIARSQMARNIWYFVVSLCYKFLSYF). Residues 466–483 (IRYGFNTILVILIWRIFI) form a helical membrane-spanning segment. Residues 484-515 (ARSQMARNIWYFVVSLCYKFLSYFRASSTMRY) lie on the Peroxisomal side of the membrane.

It belongs to the fatty acyl-CoA reductase family. In terms of assembly, interacts with PEX19; PEX19 mediates the targeting of FAR1 to peroxisomes.

It localises to the peroxisome membrane. The catalysed reaction is a long-chain fatty acyl-CoA + 2 NADPH + 2 H(+) = a long-chain primary fatty alcohol + 2 NADP(+) + CoA. It catalyses the reaction hexadecanoyl-CoA + 2 NADPH + 2 H(+) = hexadecan-1-ol + 2 NADP(+) + CoA. It carries out the reaction octadecanoyl-CoA + 2 NADPH + 2 H(+) = octadecan-1-ol + 2 NADP(+) + CoA. The enzyme catalyses eicosanoyl-CoA + 2 NADPH + 2 H(+) = eicosan-1-ol + 2 NADP(+) + CoA. The catalysed reaction is (9Z)-octadecenoyl-CoA + 2 NADPH + 2 H(+) = (9Z)-octadecen-1-ol + 2 NADP(+) + CoA. It catalyses the reaction (9Z,12Z)-octadecadienoyl-CoA + 2 NADPH + 2 H(+) = (9Z,12Z)-octadecadien-1-ol + 2 NADP(+) + CoA. It carries out the reaction 16-methylheptadecanoyl-CoA + 2 NADPH + 2 H(+) = 16-methylheptadecan-1-ol + 2 NADP(+) + CoA. The enzyme catalyses 18-methylnonadecanoyl-CoA + 2 NADPH + 2 H(+) = 18-methylnonadecan-1-ol + 2 NADP(+) + CoA. In terms of biological role, catalyzes the reduction of saturated and unsaturated C16 or C18 fatty acyl-CoA to fatty alcohols. It plays an essential role in the production of ether lipids/plasmalogens which synthesis requires fatty alcohols. In parallel, it is also required for wax monoesters production since fatty alcohols also constitute a substrate for their synthesis. The chain is Fatty acyl-CoA reductase 1 from Homo sapiens (Human).